The following is a 147-amino-acid chain: Myoglobin (147 aa).

Alanine 2 is subject to N-acetylalanine. The Globin domain occupies 2–141 (ADFDAVLKCW…IIADLEANYK (140 aa)). Histidine 60 contributes to the nitrite binding site. Histidine 60 serves as a coordination point for O2. Histidine 89 contacts heme b.

The protein belongs to the globin family. In terms of assembly, monomeric.

It is found in the cytoplasm. It localises to the sarcoplasm. The catalysed reaction is Fe(III)-heme b-[protein] + nitric oxide + H2O = Fe(II)-heme b-[protein] + nitrite + 2 H(+). It carries out the reaction H2O2 + AH2 = A + 2 H2O. Functionally, monomeric heme protein which primary function is to store oxygen and facilitate its diffusion within muscle tissues. Reversibly binds oxygen through a pentacoordinated heme iron and enables its timely and efficient release as needed during periods of heightened demand. Depending on the oxidative conditions of tissues and cells, and in addition to its ability to bind oxygen, it also has a nitrite reductase activity whereby it regulates the production of bioactive nitric oxide. Under stress conditions, like hypoxia and anoxia, it also protects cells against reactive oxygen species thanks to its pseudoperoxidase activity. This Thunnus albacares (Yellowfin tuna) protein is Myoglobin (mb).